The primary structure comprises 204 residues: GTP cyclohydrolase-2 (204 aa).

GTP is bound at residue 49-53 (RIHSE). Zn(2+) is bound by residues C54, C65, and C67. GTP contacts are provided by residues Q70, 92-94 (EGR), and T114. D126 (proton acceptor) is an active-site residue. The active-site Nucleophile is R128. Residues T149 and K154 each contribute to the GTP site.

Belongs to the GTP cyclohydrolase II family. Zn(2+) serves as cofactor.

The catalysed reaction is GTP + 4 H2O = 2,5-diamino-6-hydroxy-4-(5-phosphoribosylamino)-pyrimidine + formate + 2 phosphate + 3 H(+). The protein operates within cofactor biosynthesis; riboflavin biosynthesis; 5-amino-6-(D-ribitylamino)uracil from GTP: step 1/4. Functionally, catalyzes the conversion of GTP to 2,5-diamino-6-ribosylamino-4(3H)-pyrimidinone 5'-phosphate (DARP), formate and pyrophosphate. The polypeptide is GTP cyclohydrolase-2 (Shewanella baltica (strain OS155 / ATCC BAA-1091)).